Consider the following 186-residue polypeptide: Ras-related protein rapA (186 aa).

Glycine 12 to serine 19 contributes to the GTP binding site. The Effector region motif lies at tyrosine 34 to tyrosine 42. Residues aspartate 59 to threonine 63 and asparagine 118 to aspartate 121 each bind GTP. Cysteine 183 is subject to Cysteine methyl ester. The S-geranylgeranyl cysteine moiety is linked to residue cysteine 183. A propeptide spans alanine 184–leucine 186 (removed in mature form).

This sequence belongs to the small GTPase superfamily. Ras family. As to quaternary structure, interacts with ralGDS (only when rapA is in its GTP-bound state). Interacts with the Rap guanine nucleotide exchange factor glfB.

Its subcellular location is the cell membrane. The catalysed reaction is GTP + H2O = GDP + phosphate + H(+). G protein of the Ras family that positively regulates phagocytosis and negatively regulates macropinocytosis. May be involved in the activation of guanylyl cyclase during the response to hyperosmotic conditions. Overexpressing cells generate alterations in cell shape and contractile responses. Involved in chemotaxis via regulation of the balance of Ras and Rap signaling at the leading edge of chemotaxing cells. In Dictyostelium discoideum (Social amoeba), this protein is Ras-related protein rapA (rapA).